The chain runs to 338 residues: Phosphoribosylformylglycinamidine cyclo-ligase (338 aa).

Belongs to the AIR synthase family.

Its subcellular location is the cytoplasm. It catalyses the reaction 2-formamido-N(1)-(5-O-phospho-beta-D-ribosyl)acetamidine + ATP = 5-amino-1-(5-phospho-beta-D-ribosyl)imidazole + ADP + phosphate + H(+). The protein operates within purine metabolism; IMP biosynthesis via de novo pathway; 5-amino-1-(5-phospho-D-ribosyl)imidazole from N(2)-formyl-N(1)-(5-phospho-D-ribosyl)glycinamide: step 2/2. This is Phosphoribosylformylglycinamidine cyclo-ligase from Thermoplasma volcanium (strain ATCC 51530 / DSM 4299 / JCM 9571 / NBRC 15438 / GSS1).